We begin with the raw amino-acid sequence, 533 residues long: Monogalactosyldiacylglycerol synthase 1, chloroplastic (533 aa).

Positions 155 and 189 each coordinate a 1,2-diacyl-sn-glycero-3-phospho-(1'-sn-glycerol). H155 contributes to the UDP binding site. The required for binding to diacyl glycerol stretch occupies residues 192–215; sequence QLPRSYNFLVKHGTLWKMTYYGTS. Residues R324, F413, I414, 434-438, and E456 contribute to the UDP site; that span reads GTIAE.

This sequence belongs to the glycosyltransferase 28 family. As to quaternary structure, homodimer. Expressed in roots, stems, leaves, flowers, siliques and seeds.

Its subcellular location is the plastid. The protein resides in the chloroplast inner membrane. It catalyses the reaction a 1,2-diacyl-sn-glycerol + UDP-alpha-D-galactose = a 1,2-diacyl-3-O-(beta-D-galactosyl)-sn-glycerol + UDP + H(+). The catalysed reaction is 1,2-di-(9Z,12Z-octadecadienoyl)-sn-glycerol + UDP-alpha-D-galactose = 1,2-di-(9Z,12Z-octadecadienoyl)-3-beta-D-galactosyl-sn-glycerol + UDP + H(+). It carries out the reaction 1-(9Z-octadecenoyl)-2-hexadecanoyl-sn-glycerol + UDP-alpha-D-galactose = 1-(9Z-octadecenoyl)-2-hexadecanoyl-3-beta-D-galactosyl-sn-glycerol + UDP + H(+). The enzyme catalyses 1,2-di-(9Z-octadecenoyl)-sn-glycerol + UDP-alpha-D-galactose = 1,2-di-(9Z-octadecenoyl)-3-beta-D-galactosyl-sn-glycerol + UDP + H(+). With respect to regulation, activated by phosphatidate (PA) and phosphatidylglycerol (PG). Inhibited by galvestine-1. Functionally, involved in the synthesis of the major structural component of photosynthetic membranes. Required for proper thylakoid membrane biogenesis. Does not discriminate between prokaryotic (18:1/16:0) or eukaryotic (18:2/18:2) 1,2-diacylglycerol species, but operates with some preference for the prokaryotic one. Is responsible for most galactolipid synthesis in chloroplasts. Required for the formation of thylakoid membranes and functional photosynthetic electron transport during cotyledons greening in young seedlings. May link galactolipid synthesis with the coordinated transcriptional regulation of chloroplasts and other organelles during cotyledon greening. This chain is Monogalactosyldiacylglycerol synthase 1, chloroplastic, found in Arabidopsis thaliana (Mouse-ear cress).